The sequence spans 380 residues: Actin-like protein (380 aa).

Belongs to the actin family. ARP1 subfamily.

The protein resides in the cytoplasm. It localises to the cytoskeleton. Functionally, involved in nuclear migration. May function as a component of the dynactin complex which activates force generation by cytoplasmic dynein. The polypeptide is Actin-like protein (ro-4) (Neurospora crassa (strain ATCC 24698 / 74-OR23-1A / CBS 708.71 / DSM 1257 / FGSC 987)).